The chain runs to 78 residues: Acyl carrier protein (78 aa).

Positions 1-75 (MIKEKILSIV…DLISVVKNST (75 aa)) constitute a Carrier domain. O-(pantetheine 4'-phosphoryl)serine is present on Ser-35.

The protein belongs to the acyl carrier protein (ACP) family. Post-translationally, 4'-phosphopantetheine is transferred from CoA to a specific serine of apo-ACP by AcpS. This modification is essential for activity because fatty acids are bound in thioester linkage to the sulfhydryl of the prosthetic group.

It is found in the cytoplasm. The protein operates within lipid metabolism; fatty acid biosynthesis. Functionally, carrier of the growing fatty acid chain in fatty acid biosynthesis. In Shigella flexneri, this protein is Acyl carrier protein (acpP).